Here is a 238-residue protein sequence, read N- to C-terminus: C-type lectin domain family 4 member A (238 aa).

The Cytoplasmic portion of the chain corresponds to 1-48 (MASEITYAEVKFKNESNSLHTYSESPAAPREKPIRDLRKPGSPSLLLT). An ITIM motif motif is present at residues 5 to 10 (ITYAEV). The helical; Signal-anchor for type II membrane protein transmembrane segment at 49–69 (SLMLLLLLLAITFLVAFIIYF) threads the bilayer. At 70–238 (QKYSQLLEEK…SVCQMKKINL (169 aa)) the chain is on the extracellular side. Asn-91 carries an N-linked (GlcNAc...) asparagine glycan. The cysteines at positions 107 and 118 are disulfide-linked. The region spanning 126 to 233 (SSASWNKSEE…SLKQKSVCQM (108 aa)) is the C-type lectin domain. Asn-131 and Asn-136 each carry an N-linked (GlcNAc...) asparagine glycan. Intrachain disulfides connect Cys-137/Cys-231 and Cys-205/Cys-223. Residues Val-146, Glu-152, Glu-197, Ser-199, and Glu-203 each coordinate Ca(2+). Alpha-D-mannopyranose is bound by residues 197 to 199 (EPS) and Glu-203. Residue 209-211 (IYR) participates in N-acetyl-D-glucosamine binding. Residues Asn-219 and Asp-220 each contribute to the Ca(2+) site.

In terms of assembly, may interact with PTPN6 via its ITIM site. Expressed in splenic antigen-presenting cells including B-cells, monocytes/macrophages, and dendritic cells (at protein level). Expressed in spleen and lymph node and slightly increased with dendritic cell maturation.

It is found in the cell membrane. In terms of biological role, may be involved in regulating immune reactivity. May play a role in modulating dendritic cells (DC) differentiation and/or maturation. May be involved in the inhibition of B-cell-receptor-mediated calcium mobilization and protein tyrosine phosphorylation. C-type lectin receptor that binds carbohydrates mannose and fucose but also weakly interacts with N-acetylglucosamine (GlcNAc) in a Ca(2+)-dependent manner. Involved in regulating immune reactivity. Once triggered by antigen, it is internalized by clathrin-dependent endocytosis and delivers its antigenic cargo into the antigen presentation pathway resulting in cross-priming of CD8(+) T cells. This cross-presentation and cross-priming are enhanced by TLR7 and TLR8 agonists with increased expansion of the CD8(+) T cells, high production of IFNG and TNF with reduced levels of IL4, IL5 and IL13. In plasmacytoid dendritic cells, inhibits TLR9-mediated IFNA and TNF production. May be involved via its ITIM motif (immunoreceptor tyrosine-based inhibitory motifs) in the inhibition of B-cell-receptor-mediated calcium mobilization and protein tyrosine phosphorylation. This chain is C-type lectin domain family 4 member A (Clec4a), found in Mus musculus (Mouse).